Here is a 494-residue protein sequence, read N- to C-terminus: Calmodulin-binding protein 60 A (494 aa).

The calmodulin-binding stretch occupies residues M1–E62. The segment at V132 to N252 is DNA-binding.

This sequence belongs to the plant ACBP60 protein family. Interacts with calmodulin (CaM). As to expression, expressed in stems, flowers and root.

It localises to the nucleus. Transcription activator that binds DNA in a sequence-specific manner, likely 5'-GAAATTTTGG-3', to promote the expression of target genes. In Arabidopsis thaliana (Mouse-ear cress), this protein is Calmodulin-binding protein 60 A.